The chain runs to 49 residues: Soritesidine (49 aa).

The protein resides in the secreted. Its function is as follows. Very potent toxin that exhibits a wide range of toxicities over various organisms and cells including brine shrimp larvae (Artemia salina), sea hare eggs (Aplysia kurodai), mice, and cultured mammalian cells. An SOR-containing fraction cleaves plasmid DNA in a bivalent metal ion dependent manner suggesting genotoxicity of SOR. This Spongosorites sp. (strain QM G324170) (Okinawan marine Sponge) protein is Soritesidine.